A 362-amino-acid chain; its full sequence is 3-dehydroquinate synthase (362 aa).

NAD(+)-binding positions include 71–76, 105–109, 129–130, Lys142, Lys151, and 169–172; these read DGEQYK, GVVGD, TT, and CLKT. Zn(2+) contacts are provided by Glu184, His247, and His264.

Belongs to the sugar phosphate cyclases superfamily. Dehydroquinate synthase family. Co(2+) serves as cofactor. It depends on Zn(2+) as a cofactor. The cofactor is NAD(+).

Its subcellular location is the cytoplasm. It carries out the reaction 7-phospho-2-dehydro-3-deoxy-D-arabino-heptonate = 3-dehydroquinate + phosphate. It functions in the pathway metabolic intermediate biosynthesis; chorismate biosynthesis; chorismate from D-erythrose 4-phosphate and phosphoenolpyruvate: step 2/7. Functionally, catalyzes the conversion of 3-deoxy-D-arabino-heptulosonate 7-phosphate (DAHP) to dehydroquinate (DHQ). The protein is 3-dehydroquinate synthase of Escherichia coli O6:K15:H31 (strain 536 / UPEC).